Here is a 345-residue protein sequence, read N- to C-terminus: ATP-dependent kinase YFH7 (345 aa).

Position 31 to 39 (31 to 39 (GPPGSGKST)) interacts with ATP.

The protein belongs to the YFH7 family.

ATP-dependent kinase that could be involved in endoplasmic reticulum membrane assembly. The polypeptide is ATP-dependent kinase YFH7 (YFH7) (Candida glabrata (strain ATCC 2001 / BCRC 20586 / JCM 3761 / NBRC 0622 / NRRL Y-65 / CBS 138) (Yeast)).